A 205-amino-acid chain; its full sequence is Guanylate kinase (205 aa).

Residues 6–185 enclose the Guanylate kinase-like domain; sequence GLLIVLSGPS…ACERIKAIVV (180 aa). 13-20 is an ATP binding site; that stretch reads GPSGVGKG.

The protein belongs to the guanylate kinase family.

The protein localises to the cytoplasm. The catalysed reaction is GMP + ATP = GDP + ADP. Functionally, essential for recycling GMP and indirectly, cGMP. The protein is Guanylate kinase of Bacillus anthracis.